A 227-amino-acid polypeptide reads, in one-letter code: Uracil-DNA glycosylase (227 aa).

Asp-64 acts as the Proton acceptor in catalysis.

This sequence belongs to the uracil-DNA glycosylase (UDG) superfamily. UNG family.

It is found in the cytoplasm. It carries out the reaction Hydrolyzes single-stranded DNA or mismatched double-stranded DNA and polynucleotides, releasing free uracil.. Functionally, excises uracil residues from the DNA which can arise as a result of misincorporation of dUMP residues by DNA polymerase or due to deamination of cytosine. The chain is Uracil-DNA glycosylase from Serratia proteamaculans (strain 568).